We begin with the raw amino-acid sequence, 1434 residues long: Probable ATP-dependent RNA helicase spindle-E (1434 aa).

The disordered stretch occupies residues 66–86 (VGGPSNTKRTKTLDELESDDD). Residues 127 to 294 (MKAIKENPVV…FASCKSMPPV (168 aa)) enclose the Helicase ATP-binding domain. 140-147 (GETGCGKT) contributes to the ATP binding site. The DEAH box signature appears at 240–243 (DEVH). Residues 354 to 526 (QSEQSYEEAK…SSVLKAKELD (173 aa)) form the Helicase C-terminal domain. The 64-residue stretch at 938-1001 (ASAITKGLQL…RLMRHELRRD (64 aa)) folds into the Tudor domain.

The protein belongs to the DEAD box helicase family. DEAH subfamily.

It is found in the cytoplasm. The enzyme catalyses ATP + H2O = ADP + phosphate + H(+). Probable ATP-binding RNA helicase which plays a central role during spermatogenesis and oogenesis by repressing transposable elements and preventing their mobilization, which is essential for the germline integrity. Acts via the piRNA metabolic process, which mediates the repression of transposable elements during meiosis by forming complexes composed of piRNAs and Piwi and govern the methylation and subsequent repression of transposons. Involved in the repression of LTR retrotransposon copia. Also involved in telomere regulation by repressing specialized telomeric retroelements HeT-A, TAHRE, and TART; Drosophila telomeres being maintained by transposition of specialized telomeric retroelements. Involved in telomeric trans-silencing, a repression mechanism by which a transposon or a transgene inserted in subtelomeric heterochromatin has the capacity to repress in trans in the female germline, a homologous transposon, or transgene located in euchromatin. Involved in the repression of testis-expressed Stellate genes by the homologous Su(Ste) repeats. Required for anteroposterior and dorsoventral axis formation during oogenesis. The protein is Probable ATP-dependent RNA helicase spindle-E (spn-E) of Drosophila grimshawi (Hawaiian fruit fly).